A 291-amino-acid polypeptide reads, in one-letter code: Nucleotide-binding protein lhv_0732 (291 aa).

ATP is bound at residue 13 to 20 (GMSGAGKT). GTP is bound at residue 61 to 64 (DLRV).

Belongs to the RapZ-like family.

Functionally, displays ATPase and GTPase activities. The polypeptide is Nucleotide-binding protein lhv_0732 (Lactobacillus helveticus (strain DPC 4571)).